A 424-amino-acid chain; its full sequence is Tyrosine--tRNA ligase (424 aa).

L-tyrosine is bound at residue tyrosine 37. Positions 42 to 51 (PTADSLHLGH) match the 'HIGH' region motif. L-tyrosine contacts are provided by tyrosine 175 and glutamine 179. Residues 235–239 (KFGKT) carry the 'KMSKS' region motif. An ATP-binding site is contributed by lysine 238. Positions 357-414 (AELQKALVSAQLAPSRSQARTLIQSSSISVNGKKQLKPEYIFTSEDRLLDRYTLLRRG) constitute an S4 RNA-binding domain.

This sequence belongs to the class-I aminoacyl-tRNA synthetase family. TyrS type 1 subfamily. As to quaternary structure, homodimer.

It localises to the cytoplasm. The enzyme catalyses tRNA(Tyr) + L-tyrosine + ATP = L-tyrosyl-tRNA(Tyr) + AMP + diphosphate + H(+). Catalyzes the attachment of tyrosine to tRNA(Tyr) in a two-step reaction: tyrosine is first activated by ATP to form Tyr-AMP and then transferred to the acceptor end of tRNA(Tyr). The sequence is that of Tyrosine--tRNA ligase from Hamiltonella defensa subsp. Acyrthosiphon pisum (strain 5AT).